The chain runs to 211 residues: 2,3-bisphosphoglycerate-dependent phosphoglycerate mutase (211 aa).

Substrate contacts are provided by residues 9–16 (RHGQSDWN), 22–23 (TG), Arg-61, 88–91 (ERDY), Lys-99, 115–116 (RR), and 159–160 (GN). The Tele-phosphohistidine intermediate role is filled by His-10. Glu-88 functions as the Proton donor/acceptor in the catalytic mechanism.

This sequence belongs to the phosphoglycerate mutase family. BPG-dependent PGAM subfamily. As to quaternary structure, homodimer.

The catalysed reaction is (2R)-2-phosphoglycerate = (2R)-3-phosphoglycerate. It functions in the pathway carbohydrate degradation; glycolysis; pyruvate from D-glyceraldehyde 3-phosphate: step 3/5. Its function is as follows. Catalyzes the interconversion of 2-phosphoglycerate and 3-phosphoglycerate. In Rhizobium rhizogenes (strain K84 / ATCC BAA-868) (Agrobacterium radiobacter), this protein is 2,3-bisphosphoglycerate-dependent phosphoglycerate mutase.